The primary structure comprises 707 residues: DNA-binding protein RFX2 (707 aa).

Serine 33 bears the Phosphoserine mark. The segment at residues 204 to 279 is a DNA-binding region (RFX-type winged-helix); that stretch reads HLQWLLDNYE…YHYYGIRLKP (76 aa). Residues 297–337 are disordered; the sequence is QQPVHQKPRYRPAQKTDSLGESGSHSSLHSTPEQAMAAQSQ. The segment covering 315 to 337 has biased composition (low complexity); that stretch reads LGESGSHSSLHSTPEQAMAAQSQ. Serine 420 is subject to Phosphoserine.

Belongs to the RFX family. As to quaternary structure, homodimer; probably only forms homodimers in testis. Heterodimer; heterodimerizes with RFX1 and RFX3.

It localises to the nucleus. The protein localises to the cytoplasm. In terms of biological role, transcription factor that acts as a key regulator of spermatogenesis. Acts by regulating expression of genes required for the haploid phase during spermiogenesis, such as genes required for cilium assembly and function. Recognizes and binds the X-box, a regulatory motif with DNA sequence 5'-GTNRCC(0-3N)RGYAAC-3' present on promoters. Probably activates transcription of the testis-specific histone gene H1-6. The polypeptide is DNA-binding protein RFX2 (RFX2) (Bos taurus (Bovine)).